The following is a 419-amino-acid chain: Pyrophosphate--fructose 6-phosphate 1-phosphotransferase (419 aa).

Glycine 13 is a diphosphate binding site. Residues 142–144 (TVD), 190–192 (MGR), glutamate 247, and 297–300 (YLQR) contribute to the substrate site. Catalysis depends on aspartate 144, which acts as the Proton acceptor.

This sequence belongs to the phosphofructokinase type A (PFKA) family. PPi-dependent PFK group II subfamily. Clade 'B2' sub-subfamily. Homodimer. It depends on Mg(2+) as a cofactor.

The protein localises to the cytoplasm. It catalyses the reaction beta-D-fructose 6-phosphate + diphosphate = beta-D-fructose 1,6-bisphosphate + phosphate + H(+). It participates in carbohydrate degradation; glycolysis; D-glyceraldehyde 3-phosphate and glycerone phosphate from D-glucose: step 3/4. Its activity is regulated as follows. Non-allosteric. In terms of biological role, catalyzes the phosphorylation of D-fructose 6-phosphate, the first committing step of glycolysis. Uses inorganic phosphate (PPi) as phosphoryl donor instead of ATP like common ATP-dependent phosphofructokinases (ATP-PFKs), which renders the reaction reversible, and can thus function both in glycolysis and gluconeogenesis. Consistently, PPi-PFK can replace the enzymes of both the forward (ATP-PFK) and reverse (fructose-bisphosphatase (FBPase)) reactions. This chain is Pyrophosphate--fructose 6-phosphate 1-phosphotransferase, found in Halomonas elongata (strain ATCC 33173 / DSM 2581 / NBRC 15536 / NCIMB 2198 / 1H9).